The primary structure comprises 455 residues: uncharacterized protein (455 aa).

The next 11 membrane-spanning stretches (helical) occupy residues 26-46 (FGPG…QLLI), 53-73 (GAWG…ISIG), 77-97 (LGVM…RSTA), 111-131 (WVVA…LAVI), 146-166 (ALRA…TGVW), 191-211 (AAGV…SLVV), 232-252 (LTVL…AIAV), 256-276 (AHIG…IPAL), 278-298 (ILAA…LIVG), 323-343 (LLVA…GGGG), and 357-377 (ALVL…VVIA). A disordered region spans residues 384–455 (PKRLRPAPPV…LSDEPPPRAD (72 aa)).

Its subcellular location is the cell membrane. This is an uncharacterized protein from Mycobacterium tuberculosis (strain CDC 1551 / Oshkosh).